A 545-amino-acid chain; its full sequence is Membrane protein insertase YidC (545 aa).

Helical transmembrane passes span 350-370 (IIGNWGWAIIVLTIIVKAVLY), 424-444 (LPMLLQIPVFIGLYWALFASV), 461-481 (ADPYYILPIIMAATMFAQTYL), and 498-518 (PLVFSVMFFFFPAGLVLYWVV).

It belongs to the OXA1/ALB3/YidC family. Type 1 subfamily. In terms of assembly, interacts with the Sec translocase complex via SecD. Specifically interacts with transmembrane segments of nascent integral membrane proteins during membrane integration.

The protein localises to the cell inner membrane. In terms of biological role, required for the insertion and/or proper folding and/or complex formation of integral membrane proteins into the membrane. Involved in integration of membrane proteins that insert both dependently and independently of the Sec translocase complex, as well as at least some lipoproteins. Aids folding of multispanning membrane proteins. The polypeptide is Membrane protein insertase YidC (Neisseria meningitidis serogroup C (strain 053442)).